Reading from the N-terminus, the 1153-residue chain is ATP-dependent helicase/deoxyribonuclease subunit B (1153 aa).

The UvrD-like helicase ATP-binding domain occupies 1 to 289 (MELNAYIGRA…KHLEQNFNAL (289 aa)). Residue 8–15 (GRAGTGKS) participates in ATP binding. In terms of domain architecture, UvrD-like helicase C-terminal spans 269 to 583 (LDVQRFIHND…SIGTMDLAKV (315 aa)). Residues cysteine 784, cysteine 1110, cysteine 1113, and cysteine 1119 each contribute to the [4Fe-4S] cluster site.

The protein belongs to the helicase family. AddB/RexB type 1 subfamily. Heterodimer of AddA and AddB. It depends on Mg(2+) as a cofactor. The cofactor is [4Fe-4S] cluster.

Its function is as follows. The heterodimer acts as both an ATP-dependent DNA helicase and an ATP-dependent, dual-direction single-stranded exonuclease. Recognizes the chi site generating a DNA molecule suitable for the initiation of homologous recombination. The AddB subunit has 5' -&gt; 3' nuclease activity but not helicase activity. This is ATP-dependent helicase/deoxyribonuclease subunit B from Staphylococcus saprophyticus subsp. saprophyticus (strain ATCC 15305 / DSM 20229 / NCIMB 8711 / NCTC 7292 / S-41).